The following is a 457-amino-acid chain: C4-dicarboxylate transport protein (457 aa).

The next 7 membrane-spanning stretches (helical) occupy residues 20–42 (LYFQVVVAIVLGALLGHFEPAFA), 51–73 (AFIKLVKMIIAPVIFLTIVTGIA), 88–110 (AMAYFLFFSTLALVVGLVVAHVV), 138–158 (LTLVGFLMDIIPNSLIGAFTG), 166–188 (LTGPNILQVLFVAVLFGVSLALV), 212–234 (ILMRAAPIGAFGAIAFTIGKYGV), and 241–263 (AWLVGSFYLTSLLFVLVILGLVS).

The protein belongs to the dicarboxylate/amino acid:cation symporter (DAACS) (TC 2.A.23) family.

It is found in the cell inner membrane. Responsible for the transport of dicarboxylates such as succinate, fumarate, and malate from the periplasm across the membrane. This chain is C4-dicarboxylate transport protein, found in Xanthomonas axonopodis pv. citri (strain 306).